The following is a 277-amino-acid chain: Inositol monophosphatase 1 (277 aa).

Glu70, Asp90, Ile92, and Asp93 together coordinate Mg(2+). Glu70 contributes to the substrate binding site. 92-95 (IDGT) contributes to the substrate binding site. Thr168 is subject to Phosphothreonine. Substrate contacts are provided by residues 194–196 (GTA), Glu213, and Asp220. Asp220 lines the Mg(2+) pocket.

It belongs to the inositol monophosphatase superfamily. Homodimer. Mg(2+) is required as a cofactor.

It localises to the cytoplasm. The catalysed reaction is a myo-inositol phosphate + H2O = myo-inositol + phosphate. It carries out the reaction 1D-myo-inositol 1-phosphate + H2O = myo-inositol + phosphate. It catalyses the reaction 1D-myo-inositol 2-phosphate + H2O = myo-inositol + phosphate. The enzyme catalyses 1D-myo-inositol 3-phosphate + H2O = myo-inositol + phosphate. The catalysed reaction is 1D-myo-inositol 4-phosphate + H2O = myo-inositol + phosphate. It carries out the reaction 1D-myo-inositol 5-phosphate + H2O = myo-inositol + phosphate. It catalyses the reaction 1D-myo-inositol 6-phosphate + H2O = myo-inositol + phosphate. The enzyme catalyses scyllo-inositol 1-phosphate + H2O = scyllo-inositol + phosphate. The catalysed reaction is alpha-D-galactose 1-phosphate + H2O = D-galactose + phosphate. It carries out the reaction alpha-D-glucose 1-phosphate + H2O = D-glucose + phosphate. It catalyses the reaction D-glucose 6-phosphate + H2O = D-glucose + phosphate. The enzyme catalyses beta-D-fructose 1-phosphate + H2O = D-fructose + phosphate. The catalysed reaction is glycerol 2-phosphate + H2O = glycerol + phosphate. It carries out the reaction adenosine 2'-phosphate + H2O = adenosine + phosphate. It functions in the pathway polyol metabolism; myo-inositol biosynthesis; myo-inositol from D-glucose 6-phosphate: step 2/2. With respect to regulation, inhibited by Li(+), Ca(2+) and Mn(2+), but also by Mg(2+) at concentrations above 3 mM. Phosphatase involved in the dephosphorylation of myo-inositol monophosphate to generate myo-inositol. Is also able to dephosphorylate scyllo-inositol-phosphate, myo-inositol 1,4-diphosphate, scyllo-inositol-1,3-diphosphate and scyllo-inositol-1,4-diphosphate. Also dephosphorylates in vitro other sugar-phosphates including D-galactose-1-phosphate, glucose-1-phosphate, glucose-6-phosphate, fructose-1-phosphate, beta-glycerophosphate and 2'-AMP. Responsible for the provision of inositol required for synthesis of phosphatidylinositol and polyphosphoinositides, and involved in maintaining normal brain function. Has been implicated as the pharmacological target for lithium Li(+) action in brain. The sequence is that of Inositol monophosphatase 1 (IMPA1) from Sus scrofa (Pig).